A 351-amino-acid polypeptide reads, in one-letter code: MYSLARPLLFSLDAERAHALALRSIDTAYRTGTTSLLSTRPVPLPTPAFGLMFPNPVGLGAGLDKNGEHIDALLALGFGFVEIGTVTPRAQDGNPKPRMFRLPEYQAVINRMGFNNLGVDALVANVQRARRRGGLLGINIGKNKDTPNEEATSDYRYCMERVYPLADYITVNISSPNTAGLRELQEEQSLRRLISDLRETQEALGAQHGKRVPMLVKVAPDLNDRDIDAAARVLADLAVDGVIATNTTVTRPLIANHPLAAEAGGLSGAPLLGQSTLVLRRLRARLPESIPLIGVGGINSGADAVAKMAAGASLVQCYSGLVYRGPQLVGECVNAIRRRREAPSGGAVAPL.

FMN is bound by residues 61 to 65 (AGLDK) and Thr85. Lys65 serves as a coordination point for substrate. Residue 110-114 (NRMGF) coordinates substrate. FMN-binding residues include Asn139 and Asn172. Asn172 is a substrate binding site. Ser175 (nucleophile) is an active-site residue. Asn177 contacts substrate. The FMN site is built by Lys217 and Thr245. Substrate is bound at residue 246 to 247 (NT). Residues Gly268, Gly297, and 318–319 (YS) contribute to the FMN site.

Belongs to the dihydroorotate dehydrogenase family. Type 2 subfamily. Monomer. FMN is required as a cofactor.

It localises to the cell membrane. It carries out the reaction (S)-dihydroorotate + a quinone = orotate + a quinol. It participates in pyrimidine metabolism; UMP biosynthesis via de novo pathway; orotate from (S)-dihydroorotate (quinone route): step 1/1. Catalyzes the conversion of dihydroorotate to orotate with quinone as electron acceptor. In Xanthomonas oryzae pv. oryzae (strain MAFF 311018), this protein is Dihydroorotate dehydrogenase (quinone).